Consider the following 185-residue polypeptide: Photosystem I assembly protein Ycf4 (185 aa).

Transmembrane regions (helical) follow at residues 20–40 (GNFF…SVGA) and 57–77 (ILFF…LFIS).

This sequence belongs to the Ycf4 family.

The protein resides in the plastid. The protein localises to the chloroplast thylakoid membrane. In terms of biological role, seems to be required for the assembly of the photosystem I complex. This Agrostis stolonifera (Creeping bentgrass) protein is Photosystem I assembly protein Ycf4.